The chain runs to 480 residues: Protein nucleotidyltransferase YdiU (480 aa).

The ATP site is built by G86, G88, R89, K109, D121, G122, R172, and R179. The Proton acceptor role is filled by D248. Mg(2+)-binding residues include N249 and D258. D258 contacts ATP.

It belongs to the SELO family. Requires Mg(2+) as cofactor. Mn(2+) serves as cofactor.

The enzyme catalyses L-seryl-[protein] + ATP = 3-O-(5'-adenylyl)-L-seryl-[protein] + diphosphate. The catalysed reaction is L-threonyl-[protein] + ATP = 3-O-(5'-adenylyl)-L-threonyl-[protein] + diphosphate. It carries out the reaction L-tyrosyl-[protein] + ATP = O-(5'-adenylyl)-L-tyrosyl-[protein] + diphosphate. It catalyses the reaction L-histidyl-[protein] + UTP = N(tele)-(5'-uridylyl)-L-histidyl-[protein] + diphosphate. The enzyme catalyses L-seryl-[protein] + UTP = O-(5'-uridylyl)-L-seryl-[protein] + diphosphate. The catalysed reaction is L-tyrosyl-[protein] + UTP = O-(5'-uridylyl)-L-tyrosyl-[protein] + diphosphate. Nucleotidyltransferase involved in the post-translational modification of proteins. It can catalyze the addition of adenosine monophosphate (AMP) or uridine monophosphate (UMP) to a protein, resulting in modifications known as AMPylation and UMPylation. In Klebsiella pneumoniae subsp. pneumoniae (strain ATCC 700721 / MGH 78578), this protein is Protein nucleotidyltransferase YdiU.